Reading from the N-terminus, the 82-residue chain is Putative defensin-like protein 70 (82 aa).

The N-terminal stretch at 1-27 (MKMESSKMLVVFTLMVLIAVSSDLVSG) is a signal peptide. Cystine bridges form between C39–C80, C43–C66, C52–C78, and C56–C79.

The protein belongs to the DEFL family.

The protein localises to the secreted. The polypeptide is Putative defensin-like protein 70 (LCR83) (Arabidopsis thaliana (Mouse-ear cress)).